A 98-amino-acid polypeptide reads, in one-letter code: NADH-ubiquinone oxidoreductase chain 4L (98 aa).

Helical transmembrane passes span 1–21, 29–49, and 61–81; these read MPLIHINIMMAFIMSLVGLLM, ALLCLEGMMLSLFILTALLAL, and IILLVFAACEAAIGLALLVMI.

It belongs to the complex I subunit 4L family. Core subunit of respiratory chain NADH dehydrogenase (Complex I) which is composed of 45 different subunits.

Its subcellular location is the mitochondrion inner membrane. It catalyses the reaction a ubiquinone + NADH + 5 H(+)(in) = a ubiquinol + NAD(+) + 4 H(+)(out). Core subunit of the mitochondrial membrane respiratory chain NADH dehydrogenase (Complex I) which catalyzes electron transfer from NADH through the respiratory chain, using ubiquinone as an electron acceptor. Part of the enzyme membrane arm which is embedded in the lipid bilayer and involved in proton translocation. The chain is NADH-ubiquinone oxidoreductase chain 4L (MT-ND4L) from Kogia breviceps (Pygmy sperm whale).